Consider the following 400-residue polypeptide: Phosphoglycerate kinase (400 aa).

Residues 22 to 24 (DFN), R38, 61 to 64 (HLGR), R119, and R152 contribute to the substrate site. Residues K205, G296, E327, and 353–356 (GGDT) each bind ATP.

This sequence belongs to the phosphoglycerate kinase family. As to quaternary structure, monomer.

The protein localises to the cytoplasm. The enzyme catalyses (2R)-3-phosphoglycerate + ATP = (2R)-3-phospho-glyceroyl phosphate + ADP. The protein operates within carbohydrate degradation; glycolysis; pyruvate from D-glyceraldehyde 3-phosphate: step 2/5. This Campylobacter jejuni subsp. jejuni serotype O:6 (strain 81116 / NCTC 11828) protein is Phosphoglycerate kinase.